Reading from the N-terminus, the 77-residue chain is uncharacterized protein (77 aa).

An Inhibitor I9 domain is found at 5–74 (SYIVQLKDSV…FEPDQEMHTM (70 aa)).

The protein belongs to the protease inhibitor I9 family.

Its subcellular location is the cytoplasm. The protein localises to the nucleus. This is an uncharacterized protein from Schizosaccharomyces pombe (strain 972 / ATCC 24843) (Fission yeast).